The primary structure comprises 229 residues: Biosynthetic peptidoglycan transglycosylase (229 aa).

The chain crosses the membrane as a helical span at residues 10–30 (LLLALVLVVLYQFWIFMHILW).

It belongs to the glycosyltransferase 51 family.

It localises to the cell inner membrane. The enzyme catalyses [GlcNAc-(1-&gt;4)-Mur2Ac(oyl-L-Ala-gamma-D-Glu-L-Lys-D-Ala-D-Ala)](n)-di-trans,octa-cis-undecaprenyl diphosphate + beta-D-GlcNAc-(1-&gt;4)-Mur2Ac(oyl-L-Ala-gamma-D-Glu-L-Lys-D-Ala-D-Ala)-di-trans,octa-cis-undecaprenyl diphosphate = [GlcNAc-(1-&gt;4)-Mur2Ac(oyl-L-Ala-gamma-D-Glu-L-Lys-D-Ala-D-Ala)](n+1)-di-trans,octa-cis-undecaprenyl diphosphate + di-trans,octa-cis-undecaprenyl diphosphate + H(+). The protein operates within cell wall biogenesis; peptidoglycan biosynthesis. Its function is as follows. Peptidoglycan polymerase that catalyzes glycan chain elongation from lipid-linked precursors. The polypeptide is Biosynthetic peptidoglycan transglycosylase (Methylobacillus flagellatus (strain ATCC 51484 / DSM 6875 / VKM B-1610 / KT)).